Here is a 65-residue protein sequence, read N- to C-terminus: Large ribosomal subunit protein bL35 (65 aa).

The protein belongs to the bacterial ribosomal protein bL35 family.

The sequence is that of Large ribosomal subunit protein bL35 from Thermus thermophilus (strain ATCC BAA-163 / DSM 7039 / HB27).